We begin with the raw amino-acid sequence, 201 residues long: Homeobox protein ceh-28 (201 aa).

The segment covering 72–84 (SYYSSPSQNQRSY) has biased composition (polar residues). The segment at 72 to 94 (SYYSSPSQNQRSYQNHRQHSNPD) is disordered. Positions 104–163 (KRKPRVLFTQHQVNELEERFKKQRYVTATEREELAQCLGLTATQVKIWFQNRRYKCKRLA) form a DNA-binding region, homeobox.

The protein belongs to the NK-2 homeobox family.

Its subcellular location is the nucleus. Its function is as follows. Probable transcription factor that regulates neuronal differention, including synapse assembly of the cholinergic motor neuron M4. Activates expression of growth factor, neuropeptide and transcription factor genes, such as TGF-beta dbl-1, FMRFamide-like flp-5 and transcription repressor zag-1, in the M4 neuron. Required for pharynx peristalsis. The protein is Homeobox protein ceh-28 of Caenorhabditis elegans.